Here is a 163-residue protein sequence, read N- to C-terminus: RNA pyrophosphohydrolase (163 aa).

The Nudix hydrolase domain maps to glycine 6–lysine 149. A Nudix box motif is present at residues glycine 38–glycine 59.

This sequence belongs to the Nudix hydrolase family. RppH subfamily. It depends on a divalent metal cation as a cofactor.

In terms of biological role, accelerates the degradation of transcripts by removing pyrophosphate from the 5'-end of triphosphorylated RNA, leading to a more labile monophosphorylated state that can stimulate subsequent ribonuclease cleavage. The polypeptide is RNA pyrophosphohydrolase (Hamiltonella defensa subsp. Acyrthosiphon pisum (strain 5AT)).